Here is a 260-residue protein sequence, read N- to C-terminus: 3'-5' ssDNA/RNA exonuclease TatD (260 aa).

3 residues coordinate a divalent metal cation: Glu92, His128, and His153.

It belongs to the metallo-dependent hydrolases superfamily. TatD-type hydrolase family. TatD subfamily. In terms of assembly, monomer. Requires Mg(2+) as cofactor.

Its subcellular location is the cytoplasm. Its function is as follows. 3'-5' exonuclease that prefers single-stranded DNA and RNA. May play a role in the H(2)O(2)-induced DNA damage repair. This Pantoea vagans (strain C9-1) (Pantoea agglomerans (strain C9-1)) protein is 3'-5' ssDNA/RNA exonuclease TatD.